Reading from the N-terminus, the 323-residue chain is MPNYINYPSWLHPEVIQGIPITWYSLSYIFIILISYKFIWYQIQSDRIDIKKEDYETFMFSLVLGAILGGRLASTLVYDKSGIYYSHPWLILLPFDQDWNFTGFRGMAIHGGFLGAIIAPLITINTKLKNTNVQKYFLKLTDYGSIAFSSGYMLGRLANFANAELYGRVMKGGIIFPNAEPFDTNIPGVKEFASSVGIEILPHDLLINLPRVPSQLIEGFFEGPVTFMLLWFLFRKIKKYDGFIFGVYIMLYAFFRFFIEYLREPDKELGFIINYKPIKSLSDFSFLNISMGQILSLALMLSGLIWIIVTKKISDKKTKSILT.

The next 3 membrane-spanning stretches (helical) occupy residues 15–35, 58–78, and 106–126; these read VIQG…ILIS, FMFS…TLVY, and GMAI…TINT. R156 provides a ligand contact to a 1,2-diacyl-sn-glycero-3-phospho-(1'-sn-glycerol). A run of 2 helical transmembrane segments spans residues 242-262 and 289-309; these read GFIF…IEYL and ISMG…WIIV.

Belongs to the Lgt family.

Its subcellular location is the cell inner membrane. The enzyme catalyses L-cysteinyl-[prolipoprotein] + a 1,2-diacyl-sn-glycero-3-phospho-(1'-sn-glycerol) = an S-1,2-diacyl-sn-glyceryl-L-cysteinyl-[prolipoprotein] + sn-glycerol 1-phosphate + H(+). It functions in the pathway protein modification; lipoprotein biosynthesis (diacylglyceryl transfer). Functionally, catalyzes the transfer of the diacylglyceryl group from phosphatidylglycerol to the sulfhydryl group of the N-terminal cysteine of a prolipoprotein, the first step in the formation of mature lipoproteins. The polypeptide is Phosphatidylglycerol--prolipoprotein diacylglyceryl transferase (Borreliella afzelii (strain PKo) (Borrelia afzelii)).